The primary structure comprises 796 residues: Protocadherin beta-3 (796 aa).

Residues 1 to 26 (MEAGGERFLRQRQVLLLFVFLGGSLA) form the signal peptide. Residues 27 to 690 (GSESRRYSVA…AQADLLTVYL (664 aa)) are Extracellular-facing. 5 consecutive Cadherin domains span residues 35 to 133 (VAEE…SPVF), 138 to 242 (MHLK…APEF), 247 to 347 (YEVA…PPEL), 352 to 451 (VNSP…APAF), and 456 to 561 (YTLF…SPFV). The N-linked (GlcNAc...) asparagine glycan is linked to asparagine 169. 2 N-linked (GlcNAc...) asparagine glycosylation sites follow: asparagine 418 and asparagine 436. A glycan (N-linked (GlcNAc...) asparagine) is linked at asparagine 567. The Cadherin 6 domain occupies 568-671 (GSAPCTELVP…LVDGFSQPYL (104 aa)). A helical transmembrane segment spans residues 691-711 (VVALASVSSLFLFSVLLFVAV). The Cytoplasmic segment spans residues 712–796 (RLCRRSRAAS…PSFRKSFEFS (85 aa)).

It is found in the cell membrane. In terms of biological role, potential calcium-dependent cell-adhesion protein. May be involved in the establishment and maintenance of specific neuronal connections in the brain. The chain is Protocadherin beta-3 (PCDHB3) from Homo sapiens (Human).